A 147-amino-acid polypeptide reads, in one-letter code: MVHLTADETALVTGLWAKVNVKEYGGEALGRLLVVYPWTQRFFEHFGDLSSASAVMHNPKVKAHGEKVLASFGDGLKHLDDLKGAFAELSALHCEKSHVDPQNFKLLGNMLVCVLSRHLGKEFSPQAQAAYEKVVAGVANALAHKYH.

The 145-residue stretch at 3–147 (HLTADETALV…VANALAHKYH (145 aa)) folds into the Globin domain. S51 is subject to Phosphoserine. Residues H64 and H93 each contribute to the heme b site.

The protein belongs to the globin family. Heterotetramer of two delta chains and two alpha chains. As to expression, red blood cells.

The chain is Hemoglobin subunit delta (HBD) from Dugong dugon (Dugong).